The chain runs to 442 residues: D-serine dehydratase (442 aa).

Lys118 carries the N6-(pyridoxal phosphate)lysine modification.

It belongs to the serine/threonine dehydratase family. DsdA subfamily. Monomer. The cofactor is pyridoxal 5'-phosphate.

The catalysed reaction is D-serine = pyruvate + NH4(+). This is D-serine dehydratase from Escherichia coli O157:H7.